The primary structure comprises 494 residues: MKSLAPGIKLITSFSRDSWYRFSILFLTFVFYTSYHLSRKPISIVKSQLHRNCSNVVHPANLNITDNDTWCDWVPFDGKNYQNLFGVLDNCFLVAYAVGMFFSGIFGERLPLRYYLSTGMLLSGLFTALFGLGFYWQIHSLWYYCLVQALNGLVQTTGWPAVVACVGNWFGKGKRGFIMGVWNSHTSVGNILGSLIAGVYVSSAWGLSFIVPGIIIASTGVICFLFLVERPEDVNCTAPQHHERVEEEPLLRNSSTNEEIFNSHTSTAVEPVEDHSEAISFCGALRIPGVVEFSLCLLFAKLVSYTFLYWLPLYIANVAHFDPKKAGDLSTLFDVGGILGGIVAGLVSDYTGGRASTCCAMLIIAAPMLFLYNKIGQNGLPTTVGMLLWCGALVNGPYALITTAVSADLGTHECLRGNSRALSTVTAIIDGTGSIGAAVGPLLAGLISPTGWNNVFYMLIAADVLACLLLSRLVYKEIRGWCGYTTRQRGFKEI.

Residues 20–37 (YRFSILFLTFVFYTSYHL) traverse the membrane as a helical segment. N-linked (GlcNAc...) asparagine glycans are attached at residues N52, N63, and N67. 11 consecutive transmembrane segments (helical) span residues 85 to 105 (FGVL…FSGI), 116 to 136 (LSTG…GFYW), 146 to 166 (LVQA…VACV), 187 to 207 (SVGN…AWGL), 208 to 228 (SFIV…LFLV), 295 to 315 (LCLL…PLYI), 327 to 347 (GDLS…AGLV), 355 to 375 (ASTC…YNKI), 384 to 404 (VGML…ITTA), 427 to 447 (AIID…AGLI), and 455 to 475 (VFYM…RLVY).

This sequence belongs to the major facilitator superfamily. Organophosphate:Pi antiporter (OPA) (TC 2.A.1.4) family.

The protein localises to the endoplasmic reticulum membrane. The enzyme catalyses D-glucose 6-phosphate(in) + phosphate(out) = D-glucose 6-phosphate(out) + phosphate(in). Functionally, inorganic phosphate and glucose-6-phosphate antiporter. May transport cytoplasmic glucose-6-phosphate into the lumen of the endoplasmic reticulum and translocate inorganic phosphate into the opposite direction. The chain is Glucose-6-phosphate exchanger SLC37A2 from Danio rerio (Zebrafish).